The chain runs to 280 residues: DegV domain-containing protein CA_C1624 (280 aa).

A DegV domain is found at 4–279 (IALITDSTSD…PGLLGVVIFK (276 aa)). The hexadecanoate site is built by Thr60 and Ser93.

Its function is as follows. May bind long-chain fatty acids, such as palmitate, and may play a role in lipid transport or fatty acid metabolism. The sequence is that of DegV domain-containing protein CA_C1624 from Clostridium acetobutylicum (strain ATCC 824 / DSM 792 / JCM 1419 / IAM 19013 / LMG 5710 / NBRC 13948 / NRRL B-527 / VKM B-1787 / 2291 / W).